We begin with the raw amino-acid sequence, 623 residues long: Membrane protein insertase YidC (623 aa).

A run of 5 helical transmembrane segments spans residues 8–28 (LILA…LFPP), 379–399 (MGLA…PLAY), 449–469 (LPIL…FVTI), 507–527 (TTMA…SMWL), and 543–563 (IFAW…SGLV). Low complexity predominate over residues 601–617 (KPAAQPAGKAANDGAAP). Residues 601 to 623 (KPAAQPAGKAANDGAAPAKKRKP) are disordered.

The protein belongs to the OXA1/ALB3/YidC family. Type 1 subfamily. As to quaternary structure, interacts with the Sec translocase complex via SecD. Specifically interacts with transmembrane segments of nascent integral membrane proteins during membrane integration.

It is found in the cell inner membrane. Required for the insertion and/or proper folding and/or complex formation of integral membrane proteins into the membrane. Involved in integration of membrane proteins that insert both dependently and independently of the Sec translocase complex, as well as at least some lipoproteins. Aids folding of multispanning membrane proteins. The protein is Membrane protein insertase YidC of Cereibacter sphaeroides (strain ATCC 17023 / DSM 158 / JCM 6121 / CCUG 31486 / LMG 2827 / NBRC 12203 / NCIMB 8253 / ATH 2.4.1.) (Rhodobacter sphaeroides).